The following is a 487-amino-acid chain: Lysophospholipid acyltransferase 5 (487 aa).

Ala2 bears the N-acetylalanine mark. 4 helical membrane-spanning segments follow: residues Leu44 to Tyr64, Phe84 to Leu104, Val111 to Tyr131, and Gly180 to Gly200. Residue Asn225 is glycosylated (N-linked (GlcNAc...) asparagine). A run of 2 helical transmembrane segments spans residues Leu236–Leu256 and Val285–Phe305. 2 N-linked (GlcNAc...) asparagine glycosylation sites follow: Asn308 and Asn331. Catalysis depends on residues Asn338 and His374. A run of 3 helical transmembrane segments spans residues Gly364–Phe384, Leu422–Phe442, and Ser453–His473. Residues Lys484–Glu487 carry the Di-lysine motif motif.

This sequence belongs to the membrane-bound acyltransferase family. As to expression, detected ubiquitously, with high expression levels in small intestine, brown adipose tissue, liver, kidney and testis. Expressed in liver and both proximal and distal small intestine (at protein level). Expressed in peritoneal macrophages.

It is found in the endoplasmic reticulum membrane. The enzyme catalyses a 1-acyl-sn-glycero-3-phosphocholine + an acyl-CoA = a 1,2-diacyl-sn-glycero-3-phosphocholine + CoA. It catalyses the reaction a 1-acyl-sn-glycero-3-phosphoethanolamine + an acyl-CoA = a 1,2-diacyl-sn-glycero-3-phosphoethanolamine + CoA. It carries out the reaction a 1-acyl-sn-glycero-3-phospho-L-serine + an acyl-CoA = a 1,2-diacyl-sn-glycero-3-phospho-L-serine + CoA. The catalysed reaction is (9Z,12Z)-octadecadienoyl-CoA + a 1-acyl-sn-glycero-3-phosphocholine = 1-acyl-2-(9Z,12Z)-octadecadienoyl-sn-glycero-3-phosphocholine + CoA. The enzyme catalyses (5Z,8Z,11Z,14Z)-eicosatetraenoyl-CoA + a 1-acyl-sn-glycero-3-phosphocholine = 1-acyl-2-(5Z,8Z,11Z,14Z-eicosatetraenoyl)-sn-glycero-3-phosphocholine + CoA. It catalyses the reaction dodecanoyl-CoA + 1-hexadecanoyl-sn-glycero-3-phosphocholine = 1-hexadecanoyl-2-dodecanoyl-sn-glycero-3-phosphocholine + CoA. It carries out the reaction octadecanoyl-CoA + 1-hexadecanoyl-sn-glycero-3-phosphocholine = 1-hexadecanoyl-2-octadecanoyl-sn-glycero-3-phosphocholine + CoA. The catalysed reaction is 1-dodecanoyl-sn-glycero-3-phosphocholine + hexadecanoyl-CoA = 1-dodecanoyl-2-hexadecanoyl-sn-glycero-3-phosphocholine + CoA. The enzyme catalyses 1-tetradecanoyl-sn-glycero-3-phosphocholine + hexadecanoyl-CoA = 1-tetradecanoyl-2-hexadecanoyl-sn-glycero-3-phosphocholine + CoA. It catalyses the reaction 1-hexadecanoyl-sn-glycero-3-phosphocholine + hexadecanoyl-CoA = 1,2-dihexadecanoyl-sn-glycero-3-phosphocholine + CoA. It carries out the reaction 1-octadecanoyl-sn-glycero-3-phosphocholine + hexadecanoyl-CoA = 1-octadecanoyl-2-hexadecanoyl-sn-glycero-3-phosphocholine + CoA. The catalysed reaction is 1-(9Z-octadecenoyl)-sn-glycero-3-phosphocholine + hexadecanoyl-CoA = 1-(9Z-octadecenoyl)-2-hexadecanoyl-sn-glycero-3-phosphocholine + CoA. The enzyme catalyses (9Z)-hexadecenoyl-CoA + 1-hexadecanoyl-sn-glycero-3-phosphocholine = 1-hexadecanoyl-2-(9Z-hexadecenoyl)-sn-glycero-3-phosphocholine + CoA. It catalyses the reaction 1-hexadecanoyl-sn-glycero-3-phosphocholine + (9Z)-octadecenoyl-CoA = 1-hexadecanoyl-2-(9Z-octadecenoyl)-sn-glycero-3-phosphocholine + CoA. It carries out the reaction (9Z,12Z)-octadecadienoyl-CoA + 1-hexadecanoyl-sn-glycero-3-phosphocholine = 1-hexadecanoyl-2-(9Z,12Z-octadecadienoyl)-sn-glycero-3-phosphocholine + CoA. The catalysed reaction is 1-dodecanoyl-sn-glycero-3-phosphocholine + (5Z,8Z,11Z,14Z)-eicosatetraenoyl-CoA = 1-dodecanoyl-2-(5Z,8Z,11Z,14Z)-eicosatetraenoyl-sn-glycero-3-phosphocholine + CoA. The enzyme catalyses (5Z,8Z,11Z,14Z)-eicosatetraenoyl-CoA + 1-hexadecanoyl-sn-glycero-3-phosphocholine = 1-hexadecanoyl-2-(5Z,8Z,11Z,14Z-eicosatetraenoyl)-sn-glycero-3-phosphocholine + CoA. It catalyses the reaction 1-octadecanoyl-sn-glycero-3-phosphocholine + (5Z,8Z,11Z,14Z)-eicosatetraenoyl-CoA = 1-octadecanoyl-2-(5Z,8Z,11Z,14Z-eicosatetraenoyl)-sn-glycero-3-phosphocholine + CoA. It carries out the reaction 1-eicosanoyl-sn-glycero-3-phosphocholine + (5Z,8Z,11Z,14Z)-eicosatetraenoyl-CoA = 1-eicosanoyl-2-(5Z,8Z,11Z,14Z)-eicosatetraenoyl-sn-glycero-3-phosphocholine + CoA. The catalysed reaction is 1-(9Z-octadecenoyl)-sn-glycero-3-phosphocholine + (9Z)-octadecenoyl-CoA = 1,2-di-(9Z-octadecenoyl)-sn-glycero-3-phosphocholine + CoA. The enzyme catalyses 1-(9Z-octadecenoyl)-sn-glycero-3-phosphocholine + (9Z,12Z)-octadecadienoyl-CoA = 1-(9Z)-octadecenoyl-2-(9Z,12Z)-octadecadienoyl-sn-glycero-3-phosphocholine + CoA. It catalyses the reaction 1-(9Z-octadecenoyl)-sn-glycero-3-phosphocholine + (5Z,8Z,11Z,14Z)-eicosatetraenoyl-CoA = 1-(9Z)-octadecenoyl-2-(5Z,8Z,11Z,14Z)-icosatetraenoyl-sn-glycero-3-phosphocholine + CoA. It carries out the reaction a 1-acyl-sn-glycero-3-phosphoethanolamine + (9Z,12Z)-octadecadienoyl-CoA = 1-acyl-2-(9Z,12Z)-octadecadienoyl-sn-glycero-3-phosphoethanolamine + CoA. The catalysed reaction is 1-(9Z-octadecenoyl)-sn-glycero-3-phosphoethanolamine + (9Z,12Z)-octadecadienoyl-CoA = 1-(9Z)-octadecenoyl-2-(9Z,12Z)-octadecadienoyl-sn-glycero-3-phosphoethanolamine + CoA. The enzyme catalyses 1-(10Z-heptadecenoyl)-sn-glycero-3-phosphoethanolamine + (9Z,12Z)-octadecadienoyl-CoA = 1-(10Z-heptadecenoyl)-2-(9Z,12Z-octadecadienoyl)-sn-glycero-3-phosphoethanolamine + CoA. It catalyses the reaction a 1-acyl-sn-glycero-3-phosphoethanolamine + (5Z,8Z,11Z,14Z)-eicosatetraenoyl-CoA = 1-acyl-2-(5Z,8Z,11Z,14Z)-eicosatetraenoyl-sn-glycero-3-phosphoethanolamine + CoA. It carries out the reaction 1-hexadecanoyl-sn-glycero-3-phosphoethanolamine + (5Z,8Z,11Z,14Z)-eicosatetraenoyl-CoA = 1-hexadecanoyl-2-(5Z,8Z,11Z,14Z-eicosatetraenoyl)-sn-glycero-3-phosphoethanolamine + CoA. The catalysed reaction is 1-(9Z-octadecenoyl)-sn-glycero-3-phosphoethanolamine + (5Z,8Z,11Z,14Z)-eicosatetraenoyl-CoA = 1-(9Z)-octadecenoyl-2-(5Z,8Z,11Z,14Z)-eicosatetraenoyl-sn-glycero-3-phosphoethanolamine + CoA. The enzyme catalyses 1-(10Z-heptadecenoyl)-sn-glycero-3-phosphoethanolamine + (5Z,8Z,11Z,14Z)-eicosatetraenoyl-CoA = 1-(10Z-heptadecenoyl)-2-(5Z,8Z,11Z,14Z-eicosatetraenoyl)-sn-glycero-3-phosphoethanolamine + CoA. It catalyses the reaction a 1-O-(1Z-alkenyl)-sn-glycero-3-phosphoethanolamine + (5Z,8Z,11Z,14Z)-eicosatetraenoyl-CoA = 1-O-(1Z)-alkenyl-2-(5Z,8Z,11Z,14Z)-eicosatetraenoyl-sn-glycero-3-phosphoethanolamine + CoA. It carries out the reaction a 1-acyl-sn-glycero-3-phospho-L-serine + (9Z,12Z)-octadecadienoyl-CoA = 1-acyl-2-(9Z,12Z-octadecadienoyl)-sn-glycero-3-phospho-L-serine + CoA. The catalysed reaction is a 1-acyl-sn-glycero-3-phospho-L-serine + (5Z,8Z,11Z,14Z)-eicosatetraenoyl-CoA = 1-acyl-2-(5Z,8Z,11Z,14Z-eicosatetraenoyl)-sn-glycero-3-phospho-L-serine + CoA. The enzyme catalyses 1-hexadecanoyl-sn-glycero-3-phospho-L-serine + (9Z)-octadecenoyl-CoA = 1-hexadecanoyl-2-(9Z-octadecenoyl)-sn-glycero-3-phospho-L-serine + CoA. It catalyses the reaction 1-(9Z-octadecenoyl)-sn-glycero-3-phospho-L-serine + (9Z)-octadecenoyl-CoA = 1,2-di-(9Z)-octadecenoyl-sn-glycero-3-phospho-L-serine + CoA. It carries out the reaction 1-hexadecanoyl-sn-glycero-3-phospho-L-serine + (9Z,12Z)-octadecadienoyl-CoA = 1-hexadecanoyl-2-(9Z,12Z-octadecadienoyl)-sn-glycero-3-phospho-L-serine + CoA. The catalysed reaction is 1-(9Z-octadecenoyl)-sn-glycero-3-phospho-L-serine + (9Z,12Z)-octadecadienoyl-CoA = 1-(9Z-octadecenoyl)-2-(9Z,12Z-octadienoyl)-sn-glycero-3-phospho-L-serine + CoA. The enzyme catalyses 1-hexadecanoyl-sn-glycero-3-phospho-L-serine + (5Z,8Z,11Z,14Z)-eicosatetraenoyl-CoA = 1-hexadecanoyl-2-(5Z,8Z,11Z,14Z-eicosatetraenoyl)-sn-glycero-3-phospho-L-serine + CoA. It catalyses the reaction 1-(9Z-octadecenoyl)-sn-glycero-3-phospho-L-serine + (5Z,8Z,11Z,14Z)-eicosatetraenoyl-CoA = 1-(9Z-octadecenoyl)-2-(5Z,8Z,11Z,14Z-eicosatetraenoyl)-sn-glycero-3-phospho-L-serine + CoA. It functions in the pathway lipid metabolism; phospholipid metabolism. Its function is as follows. Lysophospholipid O-acyltransferase (LPLAT) that catalyzes the reacylation step of the phospholipid remodeling process also known as the Lands cycle. Catalyzes transfer of the fatty acyl chain from fatty acyl-CoA to 1-acyl lysophospholipid to form various classes of phospholipids. Converts 1-acyl lysophosphatidylcholine (LPC) into phosphatidylcholine (PC) (LPCAT activity), 1-acyl lysophosphatidylserine (LPS) into phosphatidylserine (PS) (LPSAT activity) and 1-acyl lysophosphatidylethanolamine (LPE) into phosphatidylethanolamine (PE) (LPEAT activity). Favors polyunsaturated fatty acyl-CoAs as acyl donors compared to saturated fatty acyl-CoAs. Has higher activity for LPC acyl acceptors compared to LPEs and LPSs. Can also transfer the fatty acyl chain from fatty acyl-CoA to 1-O-alkyl lysophospholipid or 1-O-alkenyl lysophospholipid with lower efficiency. Acts as a major LPC O-acyltransferase in liver and intestine. As a component of the liver X receptor/NR1H3 or NR1H2 signaling pathway, mainly catalyzes the incorporation of arachidonate into PCs of endoplasmic reticulum (ER) membranes, increasing membrane dynamics and enabling triacylglycerols transfer to nascent very low-density lipoprotein (VLDL) particles. Promotes processing of sterol regulatory protein SREBF1 in hepatocytes, likely by facilitating the translocation of SREBF1-SCAP complex from ER to the Golgi apparatus. Participates in mechanisms by which the liver X receptor/NR1H3 or NR1H2 signaling pathway counteracts lipid-induced ER stress response and inflammation. Down-regulates hepatic inflammation by limiting arachidonic acid availability for synthesis of inflammatory eicosanoids, such as prostaglandins. In enterocytes, acts as a component of a gut-brain feedback loop that coordinates dietary lipid absorption and food intake. Regulates the abundance of PCs containing linoleate and arachidonate in enterocyte membranes, enabling passive diffusion of fatty acids and cholesterol across the membrane for efficient chylomicron assembly. In the intestinal crypt, acts as a component of dietary-responsive phospholipid-cholesterol axis, regulating the biosynthesis of cholesterol and its mitogenic effects on intestinal stem cells. This Mus musculus (Mouse) protein is Lysophospholipid acyltransferase 5 (Lpcat3).